Consider the following 269-residue polypeptide: Putative phosphoenolpyruvate synthase regulatory protein (269 aa).

149 to 156 (GVSRSGKT) serves as a coordination point for ADP.

It belongs to the pyruvate, phosphate/water dikinase regulatory protein family. PSRP subfamily.

It carries out the reaction [pyruvate, water dikinase] + ADP = [pyruvate, water dikinase]-phosphate + AMP + H(+). The enzyme catalyses [pyruvate, water dikinase]-phosphate + phosphate + H(+) = [pyruvate, water dikinase] + diphosphate. Bifunctional serine/threonine kinase and phosphorylase involved in the regulation of the phosphoenolpyruvate synthase (PEPS) by catalyzing its phosphorylation/dephosphorylation. This is Putative phosphoenolpyruvate synthase regulatory protein from Pseudoalteromonas translucida (strain TAC 125).